The following is a 207-amino-acid chain: MMIVIGYDAGNTANVLRALAQVGVAARLSADPQEILAADGLILPGVGAFPAAMQELEKRGLISVIQQAVADGKPLLGICLGMQLLLESGLENGQNSGLGLIPGVCRRIPDQAGLPVPHMGWNDLQLQQSSALTAGLDGQSVYFVHSYYTDVPEEYLDVTADYGRPIPAMIHRGSVFGCQFHPEKSGAVGLGILEKFKEYVYENTARY.

Positions 1–206 (MMIVIGYDAG…KEYVYENTAR (206 aa)) constitute a Glutamine amidotransferase type-1 domain. The active-site Nucleophile is C79. Catalysis depends on residues H181 and E183.

In terms of assembly, heterodimer of HisH and HisF.

It is found in the cytoplasm. The enzyme catalyses 5-[(5-phospho-1-deoxy-D-ribulos-1-ylimino)methylamino]-1-(5-phospho-beta-D-ribosyl)imidazole-4-carboxamide + L-glutamine = D-erythro-1-(imidazol-4-yl)glycerol 3-phosphate + 5-amino-1-(5-phospho-beta-D-ribosyl)imidazole-4-carboxamide + L-glutamate + H(+). It carries out the reaction L-glutamine + H2O = L-glutamate + NH4(+). Its pathway is amino-acid biosynthesis; L-histidine biosynthesis; L-histidine from 5-phospho-alpha-D-ribose 1-diphosphate: step 5/9. IGPS catalyzes the conversion of PRFAR and glutamine to IGP, AICAR and glutamate. The HisH subunit catalyzes the hydrolysis of glutamine to glutamate and ammonia as part of the synthesis of IGP and AICAR. The resulting ammonia molecule is channeled to the active site of HisF. In Streptococcus gordonii (strain Challis / ATCC 35105 / BCRC 15272 / CH1 / DL1 / V288), this protein is Imidazole glycerol phosphate synthase subunit HisH.